The following is a 432-amino-acid chain: Trigger factor (432 aa).

The 86-residue stretch at 161–246 folds into the PPIase FKBP-type domain; that stretch reads EDRVTIDFTG…LKKVEERELP (86 aa).

The protein belongs to the FKBP-type PPIase family. Tig subfamily. As to quaternary structure, homodimer and monomer. In vivo most of the ribosomes are in complex with monomeric TF. Uncomplexed TF, however, is in a monomer-dimer equilibrium with approximately two thirds of TF existing in a dimeric state.

The protein resides in the cytoplasm. It catalyses the reaction [protein]-peptidylproline (omega=180) = [protein]-peptidylproline (omega=0). Functionally, involved in protein export. Acts as a chaperone by maintaining the newly synthesized protein in an open conformation. Functions as a peptidyl-prolyl cis-trans isomerase. The polypeptide is Trigger factor (Shigella boydii serotype 4 (strain Sb227)).